The chain runs to 434 residues: Glucose-6-phosphate 1-dehydrogenase (434 aa).

Residues 7 to 14 (GSSGDLAK), arginine 36, tyrosine 93, and lysine 112 each bind NADP(+). Residues lysine 112, 137–141 (HYLLK), glutamate 175, and aspartate 193 contribute to the D-glucose 6-phosphate site. Residue histidine 198 is the Proton acceptor of the active site. Positions 280 and 285 each coordinate D-glucose 6-phosphate. Arginine 286 is an NADP(+) binding site.

This sequence belongs to the glucose-6-phosphate dehydrogenase family.

It carries out the reaction D-glucose 6-phosphate + NADP(+) = 6-phospho-D-glucono-1,5-lactone + NADPH + H(+). Its pathway is carbohydrate degradation; pentose phosphate pathway; D-ribulose 5-phosphate from D-glucose 6-phosphate (oxidative stage): step 1/3. Functionally, catalyzes the rate-limiting step of the oxidative pentose-phosphate pathway, which represents a route for the dissimilation of carbohydrates besides glycolysis. The main function of this enzyme is to provide reducing power (NADPH) and pentose phosphates for fatty acid and nucleic acid synthesis. In Encephalitozoon cuniculi (strain GB-M1) (Microsporidian parasite), this protein is Glucose-6-phosphate 1-dehydrogenase (ZWF1).